The chain runs to 779 residues: Probable ATP-dependent RNA helicase DHX40 (779 aa).

The disordered stretch occupies residues 1-28 (MSRFPAVAGRAPRRQEEGERSRDLQEER). The segment covering 13 to 28 (RRQEEGERSRDLQEER) has biased composition (basic and acidic residues). A Helicase ATP-binding domain is found at 63-231 (IQAVRDNSFL…FGNCPIFDIP (169 aa)). 76–83 (GNTGSGKT) contacts ATP. The DEAH box motif lies at 173-176 (DEAH). Residues 263–442 (TMDIHLNEMA…SVVLTLKCLA (180 aa)) enclose the Helicase C-terminal domain. Positions 737 to 779 (SKDVLKKMQRRNDDKSISDARARFLERKQQRTQDHSDTRKETG) are disordered.

The protein belongs to the DEAD box helicase family. DEAH subfamily. Ubiquitously expressed.

The catalysed reaction is ATP + H2O = ADP + phosphate + H(+). Probable ATP-dependent RNA helicase. The polypeptide is Probable ATP-dependent RNA helicase DHX40 (DHX40) (Homo sapiens (Human)).